The chain runs to 240 residues: Thyroid transcription factor 1-associated protein 26 (240 aa).

The interval 104 to 181 (LRKQQRKAGL…QEEYERVQAK (78 aa)) is disordered. Residues 131–149 (TEQTSSEEPPGGHQPQPEE) show a composition bias toward low complexity. Positions 171-181 (AQEEYERVQAK) are enriched in basic and acidic residues.

It belongs to the TAP26 family. Interacts with NKX2-1.

Its subcellular location is the nucleus. Functionally, component of the transcription complexes of the pulmonary surfactant-associated protein-B (SFTPB) and -C (SFTPC). Enhances homeobox protein Nkx-2.1-activated SFTPB and SFTPC promoter activities. This Mus musculus (Mouse) protein is Thyroid transcription factor 1-associated protein 26 (Ccdc59).